The chain runs to 366 residues: Homer protein homolog 1 (366 aa).

The region spanning 1–110 is the WH1 domain; the sequence is MGEQPIFSTR…EKFQEFKEAA (110 aa). The residue at position 2 (Gly2) is an N-acetylglycine. The interval 114–189 is disordered; it reads KEKSQEKMEL…RTQGLSHASS (76 aa). Residues 138–147 are compositionally biased toward polar residues; it reads SPLTPESING. Residues 193–364 adopt a coiled-coil conformation; it reads KHWEAELATL…LRDNLAKLLE (172 aa). Positions 302–366 are required for tetramerization; sequence KLQEVEIRNK…DNLAKLLECS (65 aa). A Phosphoserine modification is found at Ser318.

This sequence belongs to the Homer family. In terms of assembly, tetramer; this tetrameric structure is critical for forming the high-order complex with SHANK1, which in turn is necessary for the structural and functional integrity of dendritic spines. Interacts with GRM1, GRM5, ITPR1, DYN3, RYR1, RYR2 and SHANK3. Interacts with IFT57 and OPHN1. Isoform 1 and isoform 2 encode coiled-coil structures that mediate homo- and heteromultimerization. Interacts with SHANK1; forms high-order polymerized complex with a mesh-like network structure, at least composed of SHANK1, HOMER1 and DLGAP1; the complex formation is SHANK1 multimerization dependent. Interacts with NFATC4. Interacts with DAGLA (via PPXXF motif); this interaction is required for the cell membrane localization of DAGLA. Interacts with SRGAP2. In terms of tissue distribution, highly expressed in cortex, Purkinje cells of the cerebellum, hippocampus, striatum and olfactory bulb. Isoform 1 and isoform 3 are expressed in skeletal and cardiac muscle.

The protein resides in the cytoplasm. It is found in the postsynaptic density. Its subcellular location is the synapse. The protein localises to the cell projection. It localises to the dendritic spine. In terms of biological role, postsynaptic density scaffolding protein. Binds and cross-links cytoplasmic regions of GRM1, GRM5, ITPR1, DNM3, RYR1, RYR2, SHANK1 and SHANK3. By physically linking GRM1 and GRM5 with ER-associated ITPR1 receptors, it aids the coupling of surface receptors to intracellular calcium release. May also couple GRM1 to PI3 kinase through its interaction with AGAP2. Differentially regulates the functions of the calcium activated channel ryanodine receptors RYR1 and RYR2. Isoform 1 decreases the activity of RYR2, and increases the activity of RYR1, whereas isoform 3 counteracts the effects by competing for binding sites. Isoform 1 regulates the trafficking and surface expression of GRM5. Isoform 3 acts as a natural dominant negative, in dynamic competition with constitutively expressed isoform 1, and isoform 2 to regulate synaptic metabotropic glutamate function. Isoform 3, may be involved in the structural changes that occur at synapses during long-lasting neuronal plasticity and development. Forms a high-order complex with SHANK1, which in turn is necessary for the structural and functional integrity of dendritic spines. Negatively regulates T cell activation by inhibiting the calcineurin-NFAT pathway. Acts by competing with calcineurin/PPP3CA for NFAT protein binding, hence preventing NFAT activation by PPP3CA. The sequence is that of Homer protein homolog 1 from Rattus norvegicus (Rat).